Here is a 350-residue protein sequence, read N- to C-terminus: Spermidine/putrescine import ATP-binding protein PotA (350 aa).

An ABC transporter domain is found at 6-236 (LELRNISKQY…PENLWTAQFI (231 aa)). 38–45 (GPSGCGKT) is a binding site for ATP.

It belongs to the ABC transporter superfamily. Spermidine/putrescine importer (TC 3.A.1.11.1) family. The complex is composed of two ATP-binding proteins (PotA), two transmembrane proteins (PotB and PotC) and a solute-binding protein (PotD).

It localises to the cell membrane. The enzyme catalyses ATP + H2O + polyamine-[polyamine-binding protein]Side 1 = ADP + phosphate + polyamineSide 2 + [polyamine-binding protein]Side 1.. In terms of biological role, part of the ABC transporter complex PotABCD involved in spermidine/putrescine import. Responsible for energy coupling to the transport system. This chain is Spermidine/putrescine import ATP-binding protein PotA, found in Spiroplasma citri.